The chain runs to 383 residues: tRNA pseudouridine synthase B (383 aa).

Asp-53 serves as the catalytic Nucleophile.

It belongs to the pseudouridine synthase TruB family. Type 1 subfamily.

The catalysed reaction is uridine(55) in tRNA = pseudouridine(55) in tRNA. Its function is as follows. Responsible for synthesis of pseudouridine from uracil-55 in the psi GC loop of transfer RNAs. In Tropheryma whipplei (strain TW08/27) (Whipple's bacillus), this protein is tRNA pseudouridine synthase B.